A 661-amino-acid chain; its full sequence is Lateral signaling target protein 2 (661 aa).

The interval 294 to 432 (VPEDTSSTLT…SDDEITDDVQ (139 aa)) is disordered. Residues 297–310 (DTSSTLTMSDFRTN) show a composition bias toward polar residues. Low complexity-rich tracts occupy residues 330-360 (SDST…SPHS) and 381-393 (TNSN…TESP). Residues 394–411 (ETIEEPDNVDMEESSESE) are compositionally biased toward acidic residues. The span at 412 to 422 (VDTHIDETRNE) shows a compositional bias: basic and acidic residues. An FYVE-type zinc finger spans residues 566–626 (DEDCEQCTAC…VCNLCYVHRL (61 aa)). Residues Cys-572, Cys-575, Cys-588, Cys-591, Cys-596, Cys-599, Cys-618, and Cys-621 each coordinate Zn(2+). A compositionally biased stretch (polar residues) spans 641-650 (NGATVPSVTE). The disordered stretch occupies residues 641–661 (NGATVPSVTEQQSAQTASASS). Positions 651–661 (QQSAQTASASS) are enriched in low complexity.

It belongs to the lst-2 family. Expressed in vulval precursor cells (VPCs).

Its function is as follows. Negative regulator of epidermal growth factor receptor (EGFR) signaling. This is Lateral signaling target protein 2 (lst-2) from Caenorhabditis elegans.